We begin with the raw amino-acid sequence, 304 residues long: Non-specific ribonucleoside hydrolase RihC (304 aa).

His-233 is an active-site residue.

Belongs to the IUNH family. RihC subfamily.

In terms of biological role, hydrolyzes both purine and pyrimidine ribonucleosides with a broad-substrate specificity. The protein is Non-specific ribonucleoside hydrolase RihC of Shigella flexneri serotype 5b (strain 8401).